The primary structure comprises 593 residues: MLRTSVLRLLGRTGASRLSLLEDFGPRYYSSGSLSAGDDACDVRAYFTTPIFYVNAAPHIGHLYSALLADALCRHRRLRGPSTAATRFSTGTDEHGLKIQQAAATAGLAPTELCDRVSEQFQQLFQEAGISCTDFIRTTEARHRVAVQHFWGVLKSRGLLYKGVYEGWYCASDECFLPEAKVTQQPGPSGDSFPVSLESGHPVSWTKEENYIFRLSQFRKPLQRWLRGNPQAITPEPFHHVVLQWLDEELPDLSVSRRSSHLHWGIPVPGDDSQTIYVWLDALVNYLTVIGYPNAEFKSWWPATSHIIGKDILKFHAIYWPAFLLGAGMSPPQRICVHSHWTVCGQKMSKSLGNVVDPRTCLNRYTVDGFRYFLLRQGVPNWDCDYYDEKVVKLLNSELADALGGLLNRCTAKRINPSETYPAFCTTCFPSEPGLVGPSVRAQAEDYALVSAVATLPKQVADHYDNFRIYKALEAVSSCVRQTNGFVQRHAPWKLNWESPVDAPWLGTVLHVALECLRVFGTLLQPVTPSLADKLLSRLGVSASERSLGELYFLPRFYGHPCPFEGRRLGPETGLLFPRLDQSRTWLVKAHRT.

A mitochondrion-targeting transit peptide spans 1–29; it reads MLRTSVLRLLGRTGASRLSLLEDFGPRYY. The 'HIGH' region signature appears at 52–62; the sequence is FYVNAAPHIGH. The short motif at 347–351 is the 'KMSKS' region element; sequence KMSKS. Lys350 contributes to the ATP binding site.

It belongs to the class-I aminoacyl-tRNA synthetase family.

It is found in the mitochondrion matrix. It catalyses the reaction tRNA(Met) + L-methionine + ATP = L-methionyl-tRNA(Met) + AMP + diphosphate. In Homo sapiens (Human), this protein is Methionine--tRNA ligase, mitochondrial (MARS2).